The following is a 520-amino-acid chain: Cytochrome P450 monooxygenase vrtE (520 aa).

A helical transmembrane segment spans residues 16-36 (ALSLLHYVLGAIFLLLLFHML). The N-linked (GlcNAc...) asparagine glycan is linked to N137. C459 contacts heme.

The protein belongs to the cytochrome P450 family. Requires heme as cofactor.

Its subcellular location is the membrane. It functions in the pathway secondary metabolite biosynthesis; terpenoid biosynthesis. Functionally, cytochrome P450 monooxygenase; part of the gene cluster that mediates the biosynthesis of viridicatumtoxin, a tetracycline-like fungal meroterpenoid with a unique, fused spirobicyclic ring system. The first step of the pathway is the production of the malonamoyl-CoA starter unit for the polyketide synthase vrtA. The aldolase vrtJ may be involved in the synthesis of the malonamate substrate for malonamoyl-CoA synthetase vrtB. The polyketide synthase vrtA then may utilize the malonamoyl-CoA starter unit, followed by sequential condensation of eight malonyl-CoA units to form the polyketide backbone. The cyclization of the last ring could be mediated by the lactamase-like protein vrtG. The proposed post-PKS tailoring steps are a hydroxylation at C5 catalyzed the cytochrome P450 monooxygenase vrtE, a hydroxylation at C12a catalyzed by VrtH and/or VrtI, and an O-methylation by the O-methyltransferase vrtF. VrtC is then proposed to catalyze the transfer of a geranyl group synthesized by vrtD to the aromatic C ring of the tetracyclic polyketide intermediate of viridicatumtoxin to yield previridicatumtoxin. Finally, the cytochrome P450 monooxygenase vrtK catalyzes the spirocyclization of the geranyl moiety of previridicatumtoxin to afford viridicatumtoxin. This chain is Cytochrome P450 monooxygenase vrtE, found in Penicillium aethiopicum.